A 274-amino-acid chain; its full sequence is 2-amino-4,5-dihydroxy-6-oxo-7-(phosphonooxy)heptanoate synthase (274 aa).

It belongs to the DeoC/FbaB aldolase family. GriI subfamily. Homodecamer.

The enzyme catalyses 2-amino-4,5-dihydroxy-6-oxo-7-(phosphooxy)heptanoate = L-aspartate 4-semialdehyde + dihydroxyacetone phosphate. Its function is as follows. catalyzes aldol condensation between L-aspartate-4-semialdehyde (ASA) and dihydroxyacetone phosphate (DHAP), to form 2-amino-4,5-dihydroxy-6-oxo-7-(phosphonooxy)heptanoate. In Streptomyces griseus subsp. griseus (strain JCM 4626 / CBS 651.72 / NBRC 13350 / KCC S-0626 / ISP 5235), this protein is 2-amino-4,5-dihydroxy-6-oxo-7-(phosphonooxy)heptanoate synthase (griI).